We begin with the raw amino-acid sequence, 189 residues long: Large ribosomal subunit protein eL18 (189 aa).

Belongs to the eukaryotic ribosomal protein eL18 family.

Its subcellular location is the cytoplasm. This chain is Large ribosomal subunit protein eL18 (RpL18), found in Aedes aegypti (Yellowfever mosquito).